A 443-amino-acid polypeptide reads, in one-letter code: EGF-containing fibulin-like extracellular matrix protein 2 (443 aa).

The N-terminal stretch at 1 to 25 (MLPFASCLPGSLLLWALLLLLLGAA) is a signal peptide. The 46-residue stretch at 36–81 (YTECTDGYEWDADSQHCRDVNECLTIPEACKGEMKCINHYGGYLCL) folds into the EGF-like 1; atypical domain. Disulfide bonds link C58/C121, C65/C80, C71/C109, C127/C140, C134/C149, C151/C162, C168/C177, C173/C186, C188/C201, C207/C217, C213/C226, C228/C241, C247/C258, C254/C267, C269/C281, C287/C300, C294/C309, and C315/C327. The region spanning 123 to 163 (DVDECAQALHDCRPSQDCHNLPGSYQCTCPDGYRKVGPECV) is the EGF-like 2; calcium-binding domain. The EGF-like 3; calcium-binding domain occupies 164-202 (DIDECRYRYCQHRCVNLPGSFRCQCEPGFQLGPNNRSCV). An N-linked (GlcNAc...) asparagine glycan is attached at N198. Residues 203-242 (DVNECDMGAPCEQRCFNSYGTFLCRCNQGYELHRDGFSCS) enclose the EGF-like 4; calcium-binding domain. The EGF-like 5; calcium-binding domain maps to 243 to 282 (DIDECSYSSYLCQYRCVNEPGRFSCHCPQGYQLLATRLCQ). Residues 283-328 (DIDECETGAHQCSEAQTCVNFHGGYRCVDTNRCVEPYVQVSDNRCF) form the EGF-like 6; calcium-binding domain. N394 carries an N-linked (GlcNAc...) asparagine glycan.

It belongs to the fibulin family. In terms of assembly, homodimer; disulfide-linked. Multimer; allows heparin binding. Monomer. Interacts with FBN1 (via N-terminal domain); this interaction inhibits EFEMP2 binding to LOX and ELN. Interacts with LOX (via propeptide); this interaction is strong and facilitates formation of ternary complexes with ELN during elastic fiber assembly; this interaction limits interaction of EFEMP2 with FBLN5. Interacts with PITX2. Interacts with ELN with moderate affinity; this interaction regulates ELN self-assembly maturation stage. Interacts with FBLN5 with moderate affinity. Interacts with LOXL1 (via propeptide), LTBP1 and TGFB1 stronger than with LOXL2 and LTBP3. Interacts with PCOLCE. Interacts with collagen type IV trimer (COL4A1-COL4A1-COL4A2), NID2 and moderately with COL15A1-derived endostatin. Interacts with EMILIN1; this interaction promotes the incorporation of EFEMP2 into the extracellular matrix. Interacts with LTBP4; the LTBP4 long form (LTBP4L) has a stronger binding affinity than the LTBP4 short form and the LTBP4 long form promotes fibrillar deposition of EFEMP2. Post-translationally, N-glycosylated; contains mostly complex-type glycans. Not O-glycosylated. In terms of processing, cleaved by ELANE; produces a 50-55 kDa fragment. Cleaved by MMP2 and MMP9; produces several fragments.

It localises to the secreted. The protein resides in the extracellular space. It is found in the extracellular matrix. Its subcellular location is the basement membrane. In terms of biological role, plays a crucial role in elastic fiber formation in tissue, and in the formation of ultrastructural connections between elastic laminae and smooth muscle cells in the aorta, therefore participates in terminal differentiation and maturation of smooth muscle cell (SMC) and in the mechanical properties and wall integrity maintenance of the aorta. In addition, is involved in the control of collagen fibril assembly in tissue throught proteolytic activation of LOX leading to cross- linking of collagen and elastin. Also promotes ELN coacervation and participates in the deposition of ELN coacervates on to microfibrils but also regulates ELN cross- linking through LOX interaction. Moreover adheres to the cells through heparin binding in a calcium-dependent manner and regulates vascularlar smooth muscle cells proliferation through angiotensin signaling. The protein is EGF-containing fibulin-like extracellular matrix protein 2 of Cricetulus griseus (Chinese hamster).